Reading from the N-terminus, the 407-residue chain is 1-deoxy-D-xylulose 5-phosphate reductoisomerase (407 aa).

Positions 25, 26, 27, 28, 53, and 136 each coordinate NADPH. 1-deoxy-D-xylulose 5-phosphate is bound at residue Lys-137. Glu-138 serves as a coordination point for NADPH. Position 162 (Asp-162) interacts with Mn(2+). 1-deoxy-D-xylulose 5-phosphate is bound by residues Ser-163, Glu-164, Ser-188, and His-211. Glu-164 lines the Mn(2+) pocket. Gly-217 provides a ligand contact to NADPH. 1-deoxy-D-xylulose 5-phosphate contacts are provided by Ser-224, Asn-229, Lys-230, and Glu-233. Mn(2+) is bound at residue Glu-233.

It belongs to the DXR family. It depends on Mg(2+) as a cofactor. The cofactor is Mn(2+).

The catalysed reaction is 2-C-methyl-D-erythritol 4-phosphate + NADP(+) = 1-deoxy-D-xylulose 5-phosphate + NADPH + H(+). Its pathway is isoprenoid biosynthesis; isopentenyl diphosphate biosynthesis via DXP pathway; isopentenyl diphosphate from 1-deoxy-D-xylulose 5-phosphate: step 1/6. Its function is as follows. Catalyzes the NADPH-dependent rearrangement and reduction of 1-deoxy-D-xylulose-5-phosphate (DXP) to 2-C-methyl-D-erythritol 4-phosphate (MEP). The polypeptide is 1-deoxy-D-xylulose 5-phosphate reductoisomerase (Bradyrhizobium diazoefficiens (strain JCM 10833 / BCRC 13528 / IAM 13628 / NBRC 14792 / USDA 110)).